The primary structure comprises 266 residues: Undecaprenyl-diphosphatase (266 aa).

8 helical membrane-spanning segments follow: residues 1-21 (MNIF…FLPI), 43-63 (FDVV…QAMI), 83-103 (SKLA…GMIF), 114-134 (VEII…ASWF), 144-164 (TISW…LIPG), 186-206 (IQFA…LILI), 219-239 (LLAM…VFFI), and 245-265 (VGMM…FFFI).

The protein belongs to the UppP family.

It is found in the cell inner membrane. The enzyme catalyses di-trans,octa-cis-undecaprenyl diphosphate + H2O = di-trans,octa-cis-undecaprenyl phosphate + phosphate + H(+). Catalyzes the dephosphorylation of undecaprenyl diphosphate (UPP). Confers resistance to bacitracin. The sequence is that of Undecaprenyl-diphosphatase from Ruthia magnifica subsp. Calyptogena magnifica.